Reading from the N-terminus, the 647-residue chain is DNA topoisomerase 3 (647 aa).

The region spanning 2–135 is the Toprim domain; that stretch reads TRLFIAEKPS…KKETVQRLLI (134 aa). Mg(2+) is bound by residues E8, D104, and D106. The region spanning 156–608 is the Topo IA-type catalytic domain; the sequence is FIPLSVSALA…TLQGRLEQLI (453 aa). Residues 195 to 200 are interaction with DNA; that stretch reads SVGRVQ. Residue Y332 is the O-(5'-phospho-DNA)-tyrosine intermediate of the active site.

This sequence belongs to the type IA topoisomerase family. The cofactor is Mg(2+).

The enzyme catalyses ATP-independent breakage of single-stranded DNA, followed by passage and rejoining.. In terms of biological role, releases the supercoiling and torsional tension of DNA, which is introduced during the DNA replication and transcription, by transiently cleaving and rejoining one strand of the DNA duplex. Introduces a single-strand break via transesterification at a target site in duplex DNA. The scissile phosphodiester is attacked by the catalytic tyrosine of the enzyme, resulting in the formation of a DNA-(5'-phosphotyrosyl)-enzyme intermediate and the expulsion of a 3'-OH DNA strand. The free DNA strand then undergoes passage around the unbroken strand, thus removing DNA supercoils. Finally, in the religation step, the DNA 3'-OH attacks the covalent intermediate to expel the active-site tyrosine and restore the DNA phosphodiester backbone. This is DNA topoisomerase 3 from Vibrio cholerae serotype O1 (strain ATCC 39315 / El Tor Inaba N16961).